A 457-amino-acid chain; its full sequence is uncharacterized protein (457 aa).

14 consecutive transmembrane segments (helical) span residues 15-35 (YGAI…GAIA), 54-74 (IWVV…FSFL), 87-107 (GLVV…LQML), 112-132 (VIQG…IRLI), 144-164 (INSF…AAIL), 166-186 (IASW…ALLL), 205-225 (LPSA…LSGF), 229-249 (QSLT…IFFI), 269-289 (LFSL…LAMV), 308-328 (LLLT…GYLI), 334-354 (GLLG…LVLL), 357-377 (SPAD…FGLF), 400-420 (MLGT…ALML), and 428-448 (THVS…VSGL).

This sequence belongs to the major facilitator superfamily. TCR/Tet family.

The protein localises to the cell inner membrane. This is an uncharacterized protein from Escherichia coli (strain K12).